We begin with the raw amino-acid sequence, 231 residues long: tRNA (guanine-N(7)-)-methyltransferase (231 aa).

S-adenosyl-L-methionine contacts are provided by Asp57, Glu82, Asp109, and Asp132. The active site involves Asp132. Substrate-binding positions include Lys136, Asp168, and 205–208; that span reads TKFE. A disordered region spans residues 194–214; that stretch reads AFVPPPPPRPQTKFERRGLRK.

This sequence belongs to the class I-like SAM-binding methyltransferase superfamily. TrmB family.

The enzyme catalyses guanosine(46) in tRNA + S-adenosyl-L-methionine = N(7)-methylguanosine(46) in tRNA + S-adenosyl-L-homocysteine. Its pathway is tRNA modification; N(7)-methylguanine-tRNA biosynthesis. Catalyzes the formation of N(7)-methylguanine at position 46 (m7G46) in tRNA. The protein is tRNA (guanine-N(7)-)-methyltransferase of Halorhodospira halophila (strain DSM 244 / SL1) (Ectothiorhodospira halophila (strain DSM 244 / SL1)).